Reading from the N-terminus, the 653-residue chain is tRNA uridine 5-carboxymethylaminomethyl modification enzyme MnmG (653 aa).

Residues 18–23 (GAGHAG), Val-130, and Thr-195 contribute to the FAD site. Residue 287-301 (GPRYCPSIEDKVVRF) coordinates NAD(+). Gln-384 is a binding site for FAD. A disordered region spans residues 624–653 (SQTKSSASVDKRASSDNESSRPTSSASDSL). Basic and acidic residues predominate over residues 632–642 (VDKRASSDNES). Positions 643 to 653 (SRPTSSASDSL) are enriched in polar residues.

Belongs to the MnmG family. In terms of assembly, homodimer. Heterotetramer of two MnmE and two MnmG subunits. FAD serves as cofactor.

Its subcellular location is the cytoplasm. Functionally, NAD-binding protein involved in the addition of a carboxymethylaminomethyl (cmnm) group at the wobble position (U34) of certain tRNAs, forming tRNA-cmnm(5)s(2)U34. This is tRNA uridine 5-carboxymethylaminomethyl modification enzyme MnmG from Rhodopirellula baltica (strain DSM 10527 / NCIMB 13988 / SH1).